The following is a 120-amino-acid chain: MKILFVLISILYAVYCFSSEEDVDSAYLANELEPVEDINSEQYAALEPKEEQERSCAGMGQDCKDDCDCCLNIATCNCWFGRYFCSCTFGDYQTCLRKKGKCKRNRPQSCPRSNLNRKKG.

The N-terminal stretch at 1 to 16 (MKILFVLISILYAVYC) is a signal peptide. The propeptide occupies 17 to 54 (FSSEEDVDSAYLANELEPVEDINSEQYAALEPKEEQER). 4 cysteine pairs are disulfide-bonded: C56–C70, C63–C76, C69–C87, and C78–C85. Residues 56–95 (CAGMGQDCKDDCDCCLNIATCNCWFGRYFCSCTFGDYQTC) form the Agouti domain.

It belongs to the neurotoxin 05 (agouti) family. Post-translationally, contains 6 disulfide bonds. In terms of tissue distribution, expressed by the venom gland.

It localises to the secreted. This chain is U13-lycotoxin-Ls1f, found in Lycosa singoriensis (Wolf spider).